The sequence spans 144 residues: MKTYNIVIASDHSGYELKSKIINYLEQKCLNIYDCGTQDTQTVDYPDYAKKVVDIIIEKAAPIGILISDTGIGMSIAANRSSEIRAALCNDILTAENAKAHNDANILILGAKSVDNKIVFNIIDKFLTTKFEGGRHSTRLSKIK.

Residue H12 participates in substrate binding. Catalysis depends on H101, which acts as the Proton donor. R135 serves as a coordination point for substrate.

This sequence belongs to the LacAB/RpiB family.

The protein is Putative sugar phosphate isomerase RT0290 of Rickettsia typhi (strain ATCC VR-144 / Wilmington).